The sequence spans 954 residues: Chromosomal passenger complex protein BIR1 (954 aa).

BIR repeat units lie at residues 20–117 and 153–241; these read RLRT…LLIY and RKFT…YFFQ. Zn(2+) is bound by residues Cys208, Cys211, His228, and Cys237. The disordered stretch occupies residues 375 to 419; sequence NVQLTQSSSPIKKKRKFKRISPRKIFDEEDSEHSLNNNSANGDNK. Over residues 385-396 the composition is skewed to basic residues; that stretch reads IKKKRKFKRISP. Residues Ser477, Ser508, and Ser552 each carry the phosphoserine modification. Disordered stretches follow at residues 541-645 and 661-685; these read DIDR…SGKV and FSAS…ISTP. The span at 556–583 shows a compositional bias: basic and acidic residues; it reads PKTHELIRDNSEKREAQNGEFRHQKDST. Ser587 is subject to Phosphoserine. Polar residues predominate over residues 593 to 604; that stretch reads SNKSGDNSSNIT. Phosphoserine is present on residues Ser751 and Ser765. The interval 798–839 is disordered; sequence LVSGTSSYPRNSRLEEQRKETSTSLADNSKKGSSFNEGNNEK. The span at 809-818 shows a compositional bias: basic and acidic residues; that stretch reads SRLEEQRKET. Polar residues predominate over residues 819–835; sequence STSLADNSKKGSSFNEG.

As to quaternary structure, component of the CPC complex at least composed of IPL1, BIR1 and SLI15. Interacts with CBF2/NDC10. Interacts with CBF3D/SKP1.

Functionally, component of the chromosomal passenger complex (CPC), a complex that acts as a key regulator of chromosome segregation and cytokinesis. This chain is Chromosomal passenger complex protein BIR1 (BIR1), found in Saccharomyces cerevisiae (strain ATCC 204508 / S288c) (Baker's yeast).